Consider the following 365-residue polypeptide: Zinc transporter 7 (365 aa).

The first 26 residues, 1 to 26 (MAYSKACYKLTTITILLLSFTLPSLA), serve as a signal peptide directing secretion. Residues 27 to 56 (GNAENADVSECKAESGDLSCHNNKEAQKLK) are Extracellular-facing. A helical membrane pass occupies residues 57–77 (IIAIPSILVASMIGVSLPLFS). At 78-90 (RSIPALGPDREMS) the chain is on the cytoplasmic side. Residues 91–111 (VIVKTLASGVILATGFMHVLP) form a helical membrane-spanning segment. At 112 to 129 (DSFDDLTSKCLPEDPWQK) the chain is on the extracellular side. A helical transmembrane segment spans residues 130–150 (FPFATFITMISALLVLMIESF). Residues 151-210 (AMCAYARRTSKREGEVVPLENGSNSVDTQNDIQTLENGSSYVEKQEKVNEDKTSELLRNK) lie on the Cytoplasmic side of the membrane. The helical transmembrane segment at 211-231 (VIAQILELGIVVHSVVIGLAM) threads the bilayer. Topologically, residues 232–242 (GASDNKCTVQS) are extracellular. Residues 243 to 263 (LIAALCFHQLFEGMGLGGSIL) traverse the membrane as a helical segment. At 264 to 272 (QAQFKSKTN) the chain is on the cytoplasmic side. The helical transmembrane segment at 273-293 (WTMVFFFSVTTPFGIVLGMAI) threads the bilayer. The Extracellular segment spans residues 294 to 304 (QKIYDETSPTA). A helical membrane pass occupies residues 305-325 (LIVVGVLNACSAGLLIYMALV). The Cytoplasmic segment spans residues 326 to 344 (NLLAHEFFGPKIQGNIKLH). The helical transmembrane segment at 345–365 (VLGYVATFTGAAGMSLMAKWA) threads the bilayer.

It belongs to the ZIP transporter (TC 2.A.5) family.

It localises to the cell membrane. Probably mediates zinc uptake from the rhizosphere. The chain is Zinc transporter 7 (ZIP7) from Arabidopsis thaliana (Mouse-ear cress).